The following is an 881-amino-acid chain: Putative outer membrane usher protein YfcU (881 aa).

An N-terminal signal peptide occupies residues 1-29 (MPDHSLFRLRILPWCIALAMSGSYSSVWA).

Belongs to the fimbrial export usher family.

The protein localises to the cell outer membrane. Functionally, part of the yfcOPQRSUV fimbrial operon. Could contribute to adhesion to various surfaces in specific environmental niches. Increases adhesion to eukaryotic T24 bladder epithelial cells in the absence of fim genes. Probably involved in the export and assembly of fimbrial subunits across the outer membrane. The protein is Putative outer membrane usher protein YfcU (yfcU) of Escherichia coli (strain K12).